The sequence spans 392 residues: GTPase Obg (392 aa).

An Obg domain is found at 1 to 159 (MKFIDEALIR…RDLQLELMLL (159 aa)). The region spanning 160–333 (ADVGMLGLPN…LCRDIMDFIE (174 aa)) is the OBG-type G domain. Residues 166-173 (GLPNAGKS), 191-195 (FTTLV), 213-216 (DIPG), 283-286 (NKID), and 314-316 (SAA) contribute to the GTP site. Residues Ser173 and Thr193 each coordinate Mg(2+). The disordered stretch occupies residues 361 to 392 (SEQVFTEDDQEEDDWDDWSEDDEEGVEIIYKP). Positions 365-386 (FTEDDQEEDDWDDWSEDDEEGV) are enriched in acidic residues.

Belongs to the TRAFAC class OBG-HflX-like GTPase superfamily. OBG GTPase family. In terms of assembly, monomer. It depends on Mg(2+) as a cofactor.

The protein localises to the cytoplasm. In terms of biological role, an essential GTPase which binds GTP, GDP and possibly (p)ppGpp with moderate affinity, with high nucleotide exchange rates and a fairly low GTP hydrolysis rate. Plays a role in control of the cell cycle, stress response, ribosome biogenesis and in those bacteria that undergo differentiation, in morphogenesis control. This chain is GTPase Obg, found in Histophilus somni (strain 2336) (Haemophilus somnus).